We begin with the raw amino-acid sequence, 296 residues long: tRNA (guanine(9)-N1)-methyltransferase (296 aa).

The disordered stretch occupies residues 1 to 33 (MTPETNNDETLSRPKPRAALPPVPEGMSKSQWK). The SAM-dependent MTase TRM10-type domain occupies 85 to 274 (TPRVNVNQKD…SVLPARKLAE (190 aa)). S-adenosyl-L-methionine contacts are provided by residues 181 to 182 (LT), Gly-201, 205 to 209 (DKNRH), Cys-213, Leu-227, and 239 to 241 (KVL). Asp-205 (proton acceptor) is an active-site residue. The tract at residues 277–296 (DHAQESNSSSPAEEQDAQDI) is disordered.

The protein belongs to the class IV-like SAM-binding methyltransferase superfamily. TRM10 family. As to quaternary structure, monomer.

It is found in the cytoplasm. It localises to the nucleus. The enzyme catalyses guanosine(9) in tRNA + S-adenosyl-L-methionine = N(1)-methylguanosine(9) in tRNA + S-adenosyl-L-homocysteine + H(+). Functionally, S-adenosyl-L-methionine-dependent guanine N(1)-methyltransferase that catalyzes the formation of N(1)-methylguanine at position 9 (m1G9) in cytoplasmic tRNA. The polypeptide is tRNA (guanine(9)-N1)-methyltransferase (Eremothecium gossypii (strain ATCC 10895 / CBS 109.51 / FGSC 9923 / NRRL Y-1056) (Yeast)).